The primary structure comprises 86 residues: MKLLYLLLTLAIIFVLTIVHAPNVEAKALADPESDAVGFADAFGDADAEATGGLGRLIGKIAKKGAKIAAEAAANAAAEKAAEALG.

The first 26 residues, 1–26 (MKLLYLLLTLAIIFVLTIVHAPNVEA), serve as a signal peptide directing secretion. The propeptide occupies 27–52 (KALADPESDAVGFADAFGDADAEATG). Leu85 carries the leucine amide modification.

It belongs to the formicidae venom precursor-01 superfamily. Expressed by the venom gland. This toxin is detected along the entire venom gland, as well as in the venom reservoir, the venom duct and in the venom. No toxin are detected in the Dufour's gland.

It localises to the secreted. Its subcellular location is the target cell membrane. Toxin that may interact with target cell membranes, producing a concentration-dependent leak in ion conductance, possibly via multimeric pore formation. It produces an immediate sharp increase of calcium concentration in all DRG neurons. This influx in calcium stabilizes without resulting in any observable dye leakage, showing that the effect is not simply cytolytic. This toxin may be one of the major contributors to the pain associated with envenomation. The toxin also displays a weak cytotoxicity (on HEK cells) and some antimicrobial activity (MIC=2.5 uM on C.neoformans (var. grubii), MIC=10.2 uM on S.aureus), but is not hemolytic to human erythtrocytes. In vivo, intraplantar injection into mice causes spontaneous nocifensive behavior (licking, flinching, or shaking of the paw), which lasts 5-7 minutes (10 and 100 uM tested). Mechanical and heat hypoalgesia are observed at 20 and 25 minutes after injection (highest dose tested of 100 uM). In vivo, injection into crickets (A.domesticus) causes an immediate, dose-dependent, reversible and nonlethal incapacitation that lasts about 53 minutes at the highest dose tested (60 ug/g). This Myrmecia gulosa (Red bulldog ant) protein is U-myrmeciitoxin(01)-Mg1a.